The chain runs to 102 residues: UPF0213 protein XAC3202 (102 aa).

The GIY-YIG domain maps to 5–80; that stretch reads KPWHLYLLLC…KRLPRARKLA (76 aa).

Belongs to the UPF0213 family.

In Xanthomonas axonopodis pv. citri (strain 306), this protein is UPF0213 protein XAC3202.